The sequence spans 8797 residues: Nesprin-1 (8797 aa).

The actin-binding stretch occupies residues 1-289 (MATSRGASRC…KHYPDIHNAS (289 aa)). Residues 1-8746 (MATSRGASRC…GRGFLFRVLR (8746 aa)) are Cytoplasmic-facing. Calponin-homology (CH) domains lie at 27 to 134 (IVQK…LYFQ) and 178 to 283 (GNAK…KHYP). 52 Spectrin repeats span residues 314 to 397 (REDR…SRLF), 398 to 502 (DWHI…HLMK), 503 to 609 (MEFL…SMLE), 610 to 703 (EVIS…YAQA), 704 to 815 (DEMD…QLLI), 816 to 923 (PLEE…KHVE), 924 to 1024 (TNSR…HLKI), 1025 to 1122 (DVEK…LMED), 1123 to 1246 (PDKW…NSLE), 1247 to 1335 (ELIS…ERRI), 1336 to 1444 (QVTL…MEMV), 1445 to 1550 (KTKW…ILGH), 1551 to 1653 (LSQQ…LENL), 1654 to 1763 (LAHW…LQSV), 1764 to 1879 (VAEH…SHAS), 1880 to 1976 (LSGI…ADAL), 1977 to 2081 (AVLK…QGQC), 2082 to 2195 (CGLI…LRVS), 2196 to 2303 (LSIW…KDFT), 2304 to 2401 (AQST…KTQA), 2402 to 2513 (SLQE…LQDC), 2514 to 2619 (ASEL…LRSC), 2620 to 2731 (QVAL…LESV), 2732 to 2838 (ISQW…VEEI), 2839 to 2962 (VKDH…SGQV), 2963 to 3062 (AQLE…QNKE), 3063 to 3171 (QILQ…LENL), 3172 to 3275 (KIQM…VSRL), 3276 to 3387 (DRIV…LEGA), 3388 to 3490 (LSKW…SEKL), 3491 to 3593 (VRLH…RTQF), 3594 to 3720 (NNVV…YSDW), 3721 to 3814 (YGST…LEKG), 3815 to 3920 (LHLA…LEAK), 3921 to 4028 (VKDH…QRMY), 4029 to 4139 (QSLE…KHLK), 4140 to 4235 (SELW…REED), 4236 to 4339 (LQRT…IQVS), 4340 to 4451 (VTNL…LNKA), 4452 to 4560 (LSEK…LEKN), 4561 to 4669 (LVSR…VQEA), 4670 to 4776 (ILAR…LEDT), 4777 to 4882 (TSAY…CESR), 4883 to 4991 (MVQS…LTEI), 4992 to 5099 (YSQC…LQRC), 5100 to 5209 (TAQW…LEDA), 5210 to 5318 (VDEW…GKLV), 5319 to 5424 (KQEL…EQSK), 5425 to 5522 (ATSQ…LSKL), 5523 to 5630 (NQAA…LQDA), 5631 to 5736 (AKDM…MQEA), and 5737 to 5842 (VVQY…PSAH). Residues 314–8666 (REDRVIFKEM…EKLLDVSSSQ (8353 aa)) adopt a coiled-coil conformation. Ser-732 carries the phosphoserine modification. Residue Thr-2270 is modified to Phosphothreonine. Ser-5657 carries the post-translational modification Phosphoserine. Residues 5859-5886 (PVTEESGEEGTNSEISSPPACRSPSPVA) are disordered. 19 Spectrin repeats span residues 5962 to 6071 (LERQ…LEEK), 6072 to 6178 (LNDQ…SLLE), 6374 to 6485 (RQSI…RLQQ), 6486 to 6581 (ILNF…RSGL), 6582 to 6691 (NQNL…LETW), 6692 to 6795 (SHLD…TILK), 6796 to 6902 (HWTR…QEKL), 6903 to 7020 (HQLQ…LEGL), 7021 to 7128 (LESW…LKSV), 7129 to 7237 (LDQW…SKAL), 7238 to 7350 (LQLW…LQAG), 7351 to 7454 (VLDY…LQSF), 7455 to 7558 (LLQH…RGII), 7559 to 7671 (DSQI…LAFL), 7672 to 7783 (LKDW…NEWA), 7784 to 7883 (VFSE…LKET), 7884 to 7997 (LVAV…IEET), 7998 to 8106 (WRLW…LKHF), and 8107 to 8216 (IGQR…LPLP). Ser-8223 is modified (phosphoserine). Positions 8246–8279 (DSLLSPQPSSNLSLSLAQPLRSERSGRDTPASVD) are disordered. The span at 8247-8265 (SLLSPQPSSNLSLSLAQPL) shows a compositional bias: low complexity. Position 8274 is a phosphothreonine (Thr-8274). Phosphoserine occurs at positions 8277, 8280, and 8305. 3 Spectrin repeats span residues 8329-8438 (SALE…MKQN), 8439-8548 (LQKW…LQDA), and 8549-8666 (LMQC…SSSQ). Position 8360 is a phosphothreonine (Thr-8360). Residues 8671–8734 (SWSSADELDT…DSSLSEPGPG (64 aa)) form a disordered region. Composition is skewed to polar residues over residues 8680–8696 (TSGSVSPTSGRSTPNRQ) and 8704–8729 (SLSQPGPSVSSPHSRSTKGGSDSSLS). Residues 8738–8797 (RGFLFRVLRAALPLQLLLLLLIGLACLVPMSEEDYSCALSNNFARSFHPMLRYTNGPPPL) enclose the KASH domain. The helical; Anchor for type IV membrane protein transmembrane segment at 8747-8767 (AALPLQLLLLLLIGLACLVPM) threads the bilayer. The Perinuclear space segment spans residues 8768 to 8797 (SEEDYSCALSNNFARSFHPMLRYTNGPPPL).

It belongs to the nesprin family. Core component of LINC complexes which are composed of inner nuclear membrane SUN domain-containing proteins coupled to outer nuclear membrane KASH domain-containing nesprins. SUN and KASH domain-containing proteins seem to bind each other promiscuously; however, differentially expression of LINC complex constituents can give rise to specific assemblies. At least SUN1/2-containing core LINC complexes are proposed to be hexameric composed of three protomers of each KASH and SUN domain-containing protein. The SUN2:SYNE1/KASH1 LINC complex is a heterohexamer; the homotrimeric cloverleave-like conformation of the SUN domain is a prerequisite for LINC complex formation in which three separate SYNE1/KASH1 peptides bind at the interface of adjacent SUN domains. Self-associates. Interacts with SYNE3. Interacts with SPAG4/SUN4. May interact with MUSK. Interacts with F-actin via its N-terminal domain. Interacts with EMD and LMNA in vitro. Interacts (via KASH domain) with TMEM258. The disulfid bond with SUN1 or SUN2 is required for stability of the respective LINC complex under tensile forces. As to expression, expressed in HeLa, A431, A172 and HaCaT cells (at protein level). Widely expressed. Highly expressed in skeletal and smooth muscles, heart, spleen, peripheral blood leukocytes, pancreas, cerebellum, stomach, kidney and placenta. Isoform GSRP-56 is predominantly expressed in heart and skeletal muscle (at protein level).

The protein resides in the nucleus outer membrane. Its subcellular location is the nucleus. The protein localises to the nucleus envelope. It localises to the cytoplasm. It is found in the cytoskeleton. The protein resides in the myofibril. Its subcellular location is the sarcomere. The protein localises to the golgi apparatus. Functionally, multi-isomeric modular protein which forms a linking network between organelles and the actin cytoskeleton to maintain the subcellular spatial organization. As a component of the LINC (LInker of Nucleoskeleton and Cytoskeleton) complex involved in the connection between the nuclear lamina and the cytoskeleton. The nucleocytoplasmic interactions established by the LINC complex play an important role in the transmission of mechanical forces across the nuclear envelope and in nuclear movement and positioning. May be involved in nucleus-centrosome attachment and nuclear migration in neural progenitors implicating LINC complex association with SUN1/2 and probably association with cytoplasmic dynein-dynactin motor complexes; SYNE1 and SYNE2 may act redundantly. Required for centrosome migration to the apical cell surface during early ciliogenesis. May be involved in nuclear remodeling during sperm head formation in spermatogenesis; a probable SUN3:SYNE1/KASH1 LINC complex may tether spermatid nuclei to posterior cytoskeletal structures such as the manchette. This chain is Nesprin-1, found in Homo sapiens (Human).